The sequence spans 229 residues: Protein fmp52-2, mitochondrial (229 aa).

The transit peptide at 1-45 (MTTAAVFGSTGAVGGQILATLLASDAFSSVKTVSRRLPNAQSPKL) directs the protein to the mitochondrion.

Belongs to the FMP52 family.

Its subcellular location is the mitochondrion outer membrane. The protein is Protein fmp52-2, mitochondrial (fmp522) of Aspergillus oryzae (strain ATCC 42149 / RIB 40) (Yellow koji mold).